The primary structure comprises 1246 residues: HMG2-induced ER-remodeling protein 1 (1246 aa).

3 disordered regions span residues Lys-19–Thr-241, His-263–Ile-288, and Met-816–Lys-836. The span at Lys-27–Ser-41 shows a compositional bias: low complexity. The segment covering Thr-58–Thr-95 has biased composition (polar residues). Residue Ser-102 is modified to Phosphoserine. Phosphothreonine is present on Thr-128. 2 stretches are compositionally biased toward low complexity: residues Arg-154–Asn-163 and Ser-211–Ser-230. The span at Ser-271 to Ser-282 shows a compositional bias: basic and acidic residues. Ser-277 carries the post-translational modification Phosphoserine. Ser-1013 bears the Phosphoserine mark. 2 stretches are compositionally biased toward polar residues: residues Ser-1109–Ser-1133 and Ser-1200–Ala-1215. Disordered stretches follow at residues Ser-1109 to Ile-1157 and Ser-1192 to Asp-1224. Residue Thr-1130 is modified to Phosphothreonine. Phosphoserine is present on residues Ser-1200, Ser-1204, and Ser-1207.

This sequence belongs to the GIP3/HER1 family. May interact with ribosomes.

It localises to the cytoplasm. Functionally, required for HMG2-induced endoplasmic reticulum-remodeling. This chain is HMG2-induced ER-remodeling protein 1 (HER1), found in Saccharomyces cerevisiae (strain ATCC 204508 / S288c) (Baker's yeast).